We begin with the raw amino-acid sequence, 163 residues long: Flagellar assembly factor FliW (163 aa).

The segment covering 136–156 (PFFETSEKKQSGLQRLERQPE) has biased composition (basic and acidic residues). Positions 136 to 163 (PFFETSEKKQSGLQRLERQPEKSVPPAG) are disordered.

Belongs to the FliW family. As to quaternary structure, interacts with translational regulator CsrA and flagellin(s).

Its subcellular location is the cytoplasm. Acts as an anti-CsrA protein, binds CsrA and prevents it from repressing translation of its target genes, one of which is flagellin. Binds to flagellin and participates in the assembly of the flagellum. The polypeptide is Flagellar assembly factor FliW (Geotalea uraniireducens (strain Rf4) (Geobacter uraniireducens)).